A 274-amino-acid chain; its full sequence is 2-dehydro-3-deoxyphosphooctonate aldolase (274 aa).

It belongs to the KdsA family.

It is found in the cytoplasm. The catalysed reaction is D-arabinose 5-phosphate + phosphoenolpyruvate + H2O = 3-deoxy-alpha-D-manno-2-octulosonate-8-phosphate + phosphate. Its pathway is carbohydrate biosynthesis; 3-deoxy-D-manno-octulosonate biosynthesis; 3-deoxy-D-manno-octulosonate from D-ribulose 5-phosphate: step 2/3. The protein operates within bacterial outer membrane biogenesis; lipopolysaccharide biosynthesis. In Rickettsia typhi (strain ATCC VR-144 / Wilmington), this protein is 2-dehydro-3-deoxyphosphooctonate aldolase.